Reading from the N-terminus, the 825-residue chain is Breast cancer anti-estrogen resistance protein 3 (825 aa).

Alanine 2 carries the post-translational modification N-acetylalanine. 3 positions are modified to phosphoserine: serine 32, serine 78, and serine 83. The disordered stretch occupies residues 40-106; sequence DAYQDVSIHG…DRHGETFTFR (67 aa). A compositionally biased stretch (polar residues) spans 79–94; that stretch reads PRQNSPVTQDGIQESP. The span at 95–106 shows a compositional bias: basic and acidic residues; the sequence is WQDRHGETFTFR. One can recognise an SH2 domain in the interval 154 to 253; the sequence is WYHGRIPRQV…QSGAIIFQPI (100 aa). Phosphoserine is present on residues serine 182 and serine 290. Lysine 334 is modified (N6-methyllysine). A phosphoserine mark is found at serine 358, serine 363, and serine 375. Arginine 442 carries the omega-N-methylarginine modification. Phosphoserine is present on serine 471. Residues 548–818 form the Ras-GEF domain; that stretch reads DPKVIAQHVL…TALSRKLEPP (271 aa). The mediates the interaction with BCAR1/p130CAS stretch occupies residues 744–748; the sequence is LATAR.

In terms of assembly, part of a complex comprised of PTPRA, BCAR1, BCAR3 (via SH2 domain) and SRC; the formation of the complex is dependent on integrin mediated-tyrosine phosphorylation of PTPRA. Within the complex, interacts (via SH2 domain) with PTPRA (when phosphorylated on 'Tyr-798'). Interacts (via Ras-GEF domain) with BCAR1. Interacts (via Ras-GEF domain) with NEDD9. Interacts with PTK2/FAK1. Interacts with PTPN1. Interacts (via SH2 domain) with EGFR (when tyrosine-phosphorylated). Post-translationally, phosphorylated on tyrosine residues. In terms of tissue distribution, ubiquitously expressed. Found in several cancer cell lines, but not in nonmalignant breast tissue.

The protein localises to the cytoplasm. It localises to the cell junction. Its subcellular location is the focal adhesion. Acts as an adapter protein downstream of several growth factor receptors to promote cell proliferation, migration, and redistribution of actin fibers. Specifically involved in INS/insulin signaling pathway by mediating MAPK1/ERK2-MAPK3/ERK1 activation and DNA synthesis. Promotes insulin-mediated membrane ruffling. In response to vasoconstrictor peptide EDN1, involved in the activation of RAP1 downstream of PTK2B via interaction with phosphorylated BCAR1. Inhibits cell migration and invasion via regulation of TGFB-mediated matrix digestion, actin filament rearrangement, and inhibition of invadopodia activity. May inhibit TGFB-SMAD signaling, via facilitating BCAR1 and SMAD2 and/or SMAD3 interaction. Regulates EGF-induced DNA synthesis. Required for the maintenance of ocular lens morphology and structural integrity, potentially via regulation of focal adhesion complex signaling. Acts upstream of PTPRA to regulate the localization of BCAR1 and PTPRA to focal adhesions, via regulation of SRC-mediated phosphorylation of PTPRA. Positively regulates integrin-induced tyrosine phosphorylation of BCAR1. Acts as a guanine nucleotide exchange factor (GEF) for small GTPases RALA, RAP1A and RRAS. However, in a contrasting study, lacks GEF activity towards RAP1. This chain is Breast cancer anti-estrogen resistance protein 3 (BCAR3), found in Homo sapiens (Human).